Reading from the N-terminus, the 591-residue chain is MEGKWLLCLLLVLGTAAVEAHDGHDDDAIDIEDDLDDVIEEVEDSKSKSDASTPPSPKVTYKAPVPTGEVYFADSFDRGSLSGWILSKAKKDDTDDEIAKYDGKWEVDEMKETKLPGDKGLVLMSRAKHHAISAKLNKPFLFDTKPLIVQYEVNFQNGIECGGAYVKLLSKTAELSLDQFHDKTPYTIMFGPDKCGEDYKLHFIFRHKNPKTGVYEEKHAKRPDADLKTYFTDKKTHLYTLILNPDNSFEILVDQSVVNSGNLLNDMTPPVNPSREIEDPEDRKPEDWDERPKIADPDAVKPDDWDEDAPSKIPDEEATKPEGWLDDEPEYIPDPDAEKPEDWDEDMDGEWEAPQIANPKCESAPGCGVWQRPMIDNPNYKGKWKPPMIDNPNYQGIWKPRKIPNPDFFEDLEPFKMTPFSAIGLELWSMTSDIFFDNFIISGDRRVVDDWANDGWGLKKAADGAAEPGVVLQMLEAAEERPWLWVVYILTVALPVFLVILFCCSGKKQSNAMEYKKTDAPQPDVKDEEGKEEEKNKRDEEEEEEKLEEKQKSDAEEDGVTGSQDEEDSKPKAEEDEILNRSPRNRKPRRE.

Positions 1–20 (MEGKWLLCLLLVLGTAAVEA) are cleaved as a signal peptide. Topologically, residues 21–482 (HDGHDDDAID…QMLEAAEERP (462 aa)) are lumenal. Ca(2+)-binding residues include Ser-75 and Asp-118. N6-acetyllysine is present on Lys-138. Residues Cys-161 and Cys-195 are joined by a disulfide bond. The an alpha-D-glucoside site is built by Tyr-165, Lys-167, Tyr-186, and Asp-193. Residues 261–347 (GNLLNDMTPP…EKPEDWDEDM (87 aa)) are disordered. The span at 275–320 (REIEDPEDRKPEDWDERPKIADPDAVKPDDWDEDAPSKIPDEEATK) shows a compositional bias: basic and acidic residues. The interval 277–410 (IEDPEDRKPE…RKIPNPDFFE (134 aa)) is p domain (Extended arm). 5 repeat units span residues 279-291 (DPED…WDER), 296-308 (DPDA…WDED), 315-327 (DEEA…WLDD), 334-346 (DPDA…WDED), and 349-359 (GEWEAPQIANP). 2 4 X approximate repeats regions span residues 279 to 346 (DPED…WDED) and 349 to 406 (GEWE…IPNP). Acidic residues predominate over residues 324–347 (WLDDEPEYIPDPDAEKPEDWDEDM). Positions 327-360 (DEPEYIPDPDAEKPEDWDEDMDGEWEAPQIANPK) are interaction with PPIB. Cysteines 361 and 367 form a disulfide. 3 repeat units span residues 368-378 (GVWQRPMIDNP), 382-392 (GKWKPPMIDNP), and 396-406 (GIWKPRKIPNP). Residue Glu-426 coordinates an alpha-D-glucoside. Asp-437 serves as a coordination point for Ca(2+). A helical transmembrane segment spans residues 483-503 (WLWVVYILTVALPVFLVILFC). 2 S-palmitoyl cysteine lipidation sites follow: Cys-503 and Cys-504. The Cytoplasmic segment spans residues 504-591 (CSGKKQSNAM…SPRNRKPRRE (88 aa)). The interval 504–591 (CSGKKQSNAM…SPRNRKPRRE (88 aa)) is sufficient to mediate interaction with SGIP1. A compositionally biased stretch (basic and acidic residues) spans 514–539 (EYKKTDAPQPDVKDEEGKEEEKNKRD). Residues 514 to 591 (EYKKTDAPQP…SPRNRKPRRE (78 aa)) form a disordered region. Position 553 is a phosphoserine (Ser-553). The segment covering 555–568 (AEEDGVTGSQDEED) has biased composition (acidic residues). Thr-561 carries the post-translational modification Phosphothreonine. Phosphoserine; by MAPK3 is present on Ser-563. At Ser-582 the chain carries Phosphoserine.

The protein belongs to the calreticulin family. Interacts with MAPK3/ERK1. Interacts with KCNH2. Associates with ribosomes. The palmitoylated form interacts with the ribosome-translocon complex component SSR1, promoting efficient folding of glycoproteins. Interacts with SERPINA2P/SERPINA2 and with the S and Z variants of SERPINA1. Interacts with SGIP1; involved in negative regulation of endocytosis. Interacts with PPIB. Interacts with SMIM22. Interacts with TMX2. Interacts with TMEM35A/NACHO. Interacts with CHRNA7. Interacts with reticulophagy regulators RETREG2 and RETREG3. Interacts with DNM1L; may form part of a larger protein complex at the ER-mitochondrial interface during mitochondrial fission. Interacts with ADAM7. Post-translationally, phosphorylated at Ser-563 by MAPK3/ERK1. Phosphorylation by MAPK3/ERK1 increases its association with ribosomes. Palmitoylation by DHHC6 leads to the preferential localization to the perinuclear rough ER. It mediates the association of calnexin with the ribosome-translocon complex (RTC) which is required for efficient folding of glycosylated proteins. In terms of processing, ubiquitinated, leading to proteasomal degradation. Probably ubiquitinated by ZNRF4. Expressed in sperm (at protein level).

It is found in the endoplasmic reticulum membrane. Its subcellular location is the mitochondrion membrane. The protein localises to the melanosome membrane. Calcium-binding protein that interacts with newly synthesized monoglucosylated glycoproteins in the endoplasmic reticulum. It may act in assisting protein assembly and/or in the retention within the ER of unassembled protein subunits. It seems to play a major role in the quality control apparatus of the ER by the retention of incorrectly folded proteins. Associated with partial T-cell antigen receptor complexes that escape the ER of immature thymocytes, it may function as a signaling complex regulating thymocyte maturation. Additionally it may play a role in receptor-mediated endocytosis at the synapse. This chain is Calnexin (Canx), found in Mus musculus (Mouse).